A 170-amino-acid chain; its full sequence is Protein ECM34 (170 aa).

N45 carries an N-linked (GlcNAc...) asparagine glycan. Helical transmembrane passes span 51–71 (IWLL…GIGG) and 98–118 (TIVI…FKMY).

The protein belongs to the DUP/COS family.

Its subcellular location is the membrane. May be involved in cell wall organization and biogenesis. This chain is Protein ECM34 (ECM34), found in Saccharomyces cerevisiae (strain ATCC 204508 / S288c) (Baker's yeast).